A 193-amino-acid chain; its full sequence is ATP-dependent Clp protease proteolytic subunit 2 (193 aa).

Catalysis depends on Ser98, which acts as the Nucleophile. The active site involves His123.

Belongs to the peptidase S14 family. In terms of assembly, fourteen ClpP subunits assemble into 2 heptameric rings which stack back to back to give a disk-like structure with a central cavity, resembling the structure of eukaryotic proteasomes.

It localises to the cytoplasm. It carries out the reaction Hydrolysis of proteins to small peptides in the presence of ATP and magnesium. alpha-casein is the usual test substrate. In the absence of ATP, only oligopeptides shorter than five residues are hydrolyzed (such as succinyl-Leu-Tyr-|-NHMec, and Leu-Tyr-Leu-|-Tyr-Trp, in which cleavage of the -Tyr-|-Leu- and -Tyr-|-Trp bonds also occurs).. In terms of biological role, cleaves peptides in various proteins in a process that requires ATP hydrolysis. Has a chymotrypsin-like activity. Plays a major role in the degradation of misfolded proteins. In Bacillus anthracis, this protein is ATP-dependent Clp protease proteolytic subunit 2.